A 66-amino-acid polypeptide reads, in one-letter code: Large ribosomal subunit protein bL33c (66 aa).

This sequence belongs to the bacterial ribosomal protein bL33 family.

It is found in the plastid. The protein localises to the chloroplast. In Chloranthus spicatus (Chulantree), this protein is Large ribosomal subunit protein bL33c.